A 317-amino-acid chain; its full sequence is Iron-uptake system-binding protein (317 aa).

A signal peptide spans 1 to 19 (MKKISLTLLILLLALTAAA). A lipid anchor (N-palmitoyl cysteine) is attached at C20. The S-diacylglycerol cysteine moiety is linked to residue C20. Positions 57 to 317 (IAITGSVESM…KAAAEKLTQN (261 aa)) constitute a Fe/B12 periplasmic-binding domain.

The protein belongs to the bacterial solute-binding protein 8 family. As to quaternary structure, the complex is composed of one ATP-binding protein (YusV), two transmembrane proteins (FeuB and FeuC) and a solute-binding protein (FeuA).

It localises to the cell membrane. The protein localises to the cytoplasm. The protein resides in the membrane raft. Functionally, involved in the uptake of iron. Its function is as follows. Part of the ABC transporter complex FeuABC/YusV involved in import of the catecholate siderophores bacillibactin and enterobactin. This is Iron-uptake system-binding protein (feuA) from Bacillus subtilis (strain 168).